We begin with the raw amino-acid sequence, 252 residues long: Hydrolase phiM (252 aa).

The Charge relay system role is filled by Ser-126.

The protein belongs to the LovG family.

It participates in secondary metabolite biosynthesis. Its function is as follows. Hydrolase; part of the gene cluster that mediates the biosynthesis of the antihypercholesterolemic agents phomoidrides which are dimeric anhydrides. Within the pathway, phiM releases the C12-fatty acyl chain from phiA. The pathway begins with the highly reducing polyketide synthase tstA that catalyzes the formation of a C12-fatty acyl-ACP, starting from one acetate and 5 malonate units. The hydrolase tstM is involved in the release of the C12-fatty acyl chain from phiA. The alkylcitrate synthase (ACS) tstJ and the alkylcitrate dehydratase (ACDH) tstI then give rise to decarboxylated monomeric anhydrides by coupling the C12-fatty acyl chain with oxalacetic acid. The cyclase tstC is responsible for the dimerization of the monomeric anhydrides which leads to the production of prephomoidride that contains the characteristic bicyclo[4.3.1]deca-1,6-diene system of phomoidrides. Iterative oxidation catalyzed by the alpha-ketoglutarate-dependent dioxygenase tstK produced then phomoidride A. Finally, the methyltransferase tstE converts phomoidride A to phomoidride B via an acetalization reaction. The phosphatidylethanolamine-binding protein tstB and tstN are not essential for dimerization and their functions have still to be determined. This chain is Hydrolase phiM, found in Talaromyces stipitatus (strain ATCC 10500 / CBS 375.48 / QM 6759 / NRRL 1006) (Penicillium stipitatum).